We begin with the raw amino-acid sequence, 89 residues long: MSLSTEKKAAIVAEFGRDAKDTGSSEVQIALLTAQINHLQTHFAEHKKDHHGRRGLLRMVSRRRKLLDYLKRTDLALYQSTIARLGLRR.

It belongs to the universal ribosomal protein uS15 family. In terms of assembly, part of the 30S ribosomal subunit. Forms a bridge to the 50S subunit in the 70S ribosome, contacting the 23S rRNA.

In terms of biological role, one of the primary rRNA binding proteins, it binds directly to 16S rRNA where it helps nucleate assembly of the platform of the 30S subunit by binding and bridging several RNA helices of the 16S rRNA. Forms an intersubunit bridge (bridge B4) with the 23S rRNA of the 50S subunit in the ribosome. This Haemophilus influenzae (strain PittGG) protein is Small ribosomal subunit protein uS15.